The sequence spans 184 residues: Endothelial cell-specific molecule 1 (184 aa).

Residues 1–21 (MKSLLLLTTLLIPLHLGMAWS) form the signal peptide. Residues 24–102 (YAVDCPEHCD…GDEFGVCKDC (79 aa)) form the IGFBP N-terminal domain. 6 disulfide bridges follow: Cys-28-Cys-51, Cys-32-Cys-53, Cys-37-Cys-54, Cys-43-Cys-57, Cys-65-Cys-83, and Cys-77-Cys-99. Residues 145 to 184 (RTSASQTERDAASGDGNAVREEIGDRNAARPSVMKWLNPR) form a disordered region. Residues 151–172 (TERDAASGDGNAVREEIGDRNA) show a composition bias toward basic and acidic residues. Residue Ser-157 is glycosylated (O-linked (Xyl...) (chondroitin sulfate) serine).

Post-translationally, O-glycosylated; contains chondroitin sulfate and dermatan sulfate. As to expression, pineal gland specific.

The protein resides in the secreted. Involved in angiogenesis; promotes angiogenic sprouting. May have potent implications in lung endothelial cell-leukocyte interactions. The chain is Endothelial cell-specific molecule 1 (Esm1) from Rattus norvegicus (Rat).